Consider the following 29-residue polypeptide: Serum amyloid P-component (29 aa).

The region spanning 6 to 29 (LGKVFVFSKESNVDDVKLLTPQTE) is the Pentraxin (PTX) domain.

This sequence belongs to the pentraxin family. As to quaternary structure, homopentamer. Pentraxin (or pentaxin) have a discoid arrangement of 5 non-covalently bound subunits. Ca(2+) serves as cofactor.

Its subcellular location is the secreted. The chain is Serum amyloid P-component from Hippoglossus hippoglossus (Atlantic halibut).